Here is a 191-residue protein sequence, read N- to C-terminus: Ribosomal RNA small subunit methyltransferase G (191 aa).

S-adenosyl-L-methionine-binding positions include Gly-62, Leu-67, 111–112 (IE), and Arg-124.

Belongs to the methyltransferase superfamily. RNA methyltransferase RsmG family.

The protein resides in the cytoplasm. It catalyses the reaction guanosine(527) in 16S rRNA + S-adenosyl-L-methionine = N(7)-methylguanosine(527) in 16S rRNA + S-adenosyl-L-homocysteine. Functionally, specifically methylates the N7 position of guanine in position 527 of 16S rRNA. This Rickettsia rickettsii (strain Sheila Smith) protein is Ribosomal RNA small subunit methyltransferase G.